The chain runs to 180 residues: UPF0227 protein CKO_01948 (180 aa).

This sequence belongs to the UPF0227 family.

The protein is UPF0227 protein CKO_01948 of Citrobacter koseri (strain ATCC BAA-895 / CDC 4225-83 / SGSC4696).